A 448-amino-acid polypeptide reads, in one-letter code: Ribosomal protein uS12 methylthiotransferase RimO (448 aa).

The region spanning 16–126 is the MTTase N-terminal domain; the sequence is PRISFVSLGC…VVAAVHEAVP (111 aa). [4Fe-4S] cluster is bound by residues Cys-25, Cys-61, Cys-90, Cys-157, Cys-161, and Cys-164. The region spanning 143–380 is the Radical SAM core domain; that stretch reads LTPRHYAYLK…MEAQAGVSLK (238 aa). The region spanning 383–448 is the TRAM domain; sequence RAKVGKRLQV…DAYDLHGIAV (66 aa).

This sequence belongs to the methylthiotransferase family. RimO subfamily. Requires [4Fe-4S] cluster as cofactor.

Its subcellular location is the cytoplasm. It catalyses the reaction L-aspartate(89)-[ribosomal protein uS12]-hydrogen + (sulfur carrier)-SH + AH2 + 2 S-adenosyl-L-methionine = 3-methylsulfanyl-L-aspartate(89)-[ribosomal protein uS12]-hydrogen + (sulfur carrier)-H + 5'-deoxyadenosine + L-methionine + A + S-adenosyl-L-homocysteine + 2 H(+). Its function is as follows. Catalyzes the methylthiolation of an aspartic acid residue of ribosomal protein uS12. This Methylorubrum populi (strain ATCC BAA-705 / NCIMB 13946 / BJ001) (Methylobacterium populi) protein is Ribosomal protein uS12 methylthiotransferase RimO.